The following is a 513-amino-acid chain: MTSYMLGIDIGTTSTKAVLFSENGDVVQKESIGYPLYTPDISTAEQNPEEIFQAVIHTTARITKQHPEKRISFISFSSAMHSVIAIDENDKPLTPCITWADNRSEGWAHKIKEELNGHEVYKRTGTPIHPMAPLSKIAWITNERKEIASKAKKYIGIKEYIFKQLFNEYVIDYSLASATGMMNLKGLDWDEEALRIAGITPDHLSKLVPTTEIFQHCSPEIAIQMGIDPETPFVIGASDGVLSNLGVNAIKKGEIAVTIGTSGAIRTIIDKPQTDEKGRIFCYALTDKHWVIGGPVNNGGIVLRWIRDEFASSEIETATRLGIDPYDVLTKIAQRVRPGSDGLLFHPYLAGERAPLWNPDVRGSFFGLTMSHKKEHMIRAALEGVIYNLYTVFLALTECMDGPVTRIQATGGFARSEVWRQMMSDIFESEVVVPESYESSCLGACILGLYATGKIDSFDAVSDMIGSTYRHTPIEDSAKEYRTLMPIFINLSRLLENQYTQIADYQRGLITHK.

ATP contacts are provided by residues Lys-16, Thr-261, Gly-300, and 412–416; that span reads GFARS.

It belongs to the FGGY kinase family.

It carries out the reaction D-gluconate + ATP = 6-phospho-D-gluconate + ADP + H(+). It functions in the pathway carbohydrate acid metabolism; D-gluconate degradation. Catabolite repression by gluconate. This chain is Gluconokinase (gntK), found in Bacillus subtilis (strain 168).